The following is a 145-amino-acid chain: 3-hydroxyacyl-[acyl-carrier-protein] dehydratase FabZ (145 aa).

The active site involves His-48.

Belongs to the thioester dehydratase family. FabZ subfamily.

Its subcellular location is the cytoplasm. It carries out the reaction a (3R)-hydroxyacyl-[ACP] = a (2E)-enoyl-[ACP] + H2O. Functionally, involved in unsaturated fatty acids biosynthesis. Catalyzes the dehydration of short chain beta-hydroxyacyl-ACPs and long chain saturated and unsaturated beta-hydroxyacyl-ACPs. The protein is 3-hydroxyacyl-[acyl-carrier-protein] dehydratase FabZ of Geobacillus thermodenitrificans (strain NG80-2).